Here is a 403-residue protein sequence, read N- to C-terminus: Semaphorin-like protein A39 (403 aa).

The signal sequence occupies residues 1–14 (MIPLLFILFYFANG). The 389-residue stretch at 15-403 (IEWHKFETSE…MPQMKKILKM (389 aa)) folds into the Sema domain.

It belongs to the semaphorin family. In terms of assembly, interacts with host VESPR.

The protein resides in the secreted. Its function is as follows. Acts as a semaphorin-like protein and binds to host plexin C1 receptor. May alter the movement of host plexin C1-expressing cells including dendritic cells, monocytes, or granulocytes in the proximity of infected cells. May also regulate host cell cytoskeleton of neighboring cells to improve viral infection. The polypeptide is Semaphorin-like protein A39 (Homo sapiens (Human)).